A 393-amino-acid polypeptide reads, in one-letter code: Chalcone synthase G (393 aa).

Cys-164 is an active-site residue.

Belongs to the thiolase-like superfamily. Chalcone/stilbene synthases family. As to expression, expressed in seedlings after illumination with UV light. No expression detectable in flowers. It is not known for sure whether CHSG encodes a chalcone synthase or a very closely related condensing enzyme.

It catalyses the reaction (E)-4-coumaroyl-CoA + 3 malonyl-CoA + 3 H(+) = 2',4,4',6'-tetrahydroxychalcone + 3 CO2 + 4 CoA. Its pathway is secondary metabolite biosynthesis; flavonoid biosynthesis. Its function is as follows. The primary product of this enzyme is 4,2',4',6'-tetrahydroxychalcone (also termed naringenin-chalcone or chalcone) which can under specific conditions spontaneously isomerize into naringenin. The chain is Chalcone synthase G (CHSG) from Petunia hybrida (Petunia).